The sequence spans 93 residues: U12-lycotoxin-Ls1e (93 aa).

A signal peptide spans 1–18 (MKFAVILLFTLVVLAVAS). The propeptide occupies 19-38 (ESVEEDTREIDVEEFQEQQR).

This sequence belongs to the neurotoxin 31 family. Contains 5 disulfide bonds. In terms of tissue distribution, expressed by the venom gland.

The protein localises to the secreted. This chain is U12-lycotoxin-Ls1e, found in Lycosa singoriensis (Wolf spider).